The following is a 428-amino-acid chain: Cyclic AMP-responsive element-binding protein 3-like protein 4 (428 aa).

Residues 1-68 (MLLGSLFEQT…EFLQMMINPN (68 aa)) are required for transcriptional activation. The Cytoplasmic portion of the chain corresponds to 1–294 (MLLGSLFEQT…QTSNKAAQTS (294 aa)). Residues 71–111 (YSTGPAAAESPESDSGFSDDPRPDTPPQSETSPPLPQPTPV) form a disordered region. The bZIP domain maps to 216-279 (ILKKVRRKIR…ISLITQLRKL (64 aa)). The basic motif stretch occupies residues 218–247 (KKVRRKIRNKQSAQDSRRRKKEYIDGLESR). The leucine-zipper stretch occupies residues 258-279 (LHKKVVELEKHNISLITQLRKL). A helical; Signal-anchor for type II membrane protein membrane pass occupies residues 295-315 (TCVLILLFSLALLVFPSYSPF). The Lumenal segment spans residues 316 to 428 (RSRPSASQED…LSKTARADEM (113 aa)). The interval 339 to 428 (NKGGFSEVAD…LSKTARADEM (90 aa)) is disordered. Residues 354 to 368 (TLHRAQQREEGDPGR) are compositionally biased toward basic and acidic residues. N-linked (GlcNAc...) asparagine glycosylation is present at Asn-418.

The protein belongs to the bZIP family. ATF subfamily. Binds DNA as a dimer. Post-translationally, controlled by regulated intramembrane proteolysis (RIP). A fragment containing the cytoplasmic transcription factor domain is released by proteolysis. The cleavage seems to be performed sequentially by site-1 and site-2 proteases (PS1 and PS2).

The protein resides in the endoplasmic reticulum membrane. Its subcellular location is the nucleus. In terms of biological role, transcriptional activator. The chain is Cyclic AMP-responsive element-binding protein 3-like protein 4 (creb3l4) from Xenopus tropicalis (Western clawed frog).